The following is a 69-amino-acid chain: Ubiquitin-ribosomal protein eL40 fusion protein (69 aa).

The Ubiquitin-like domain occupies 1–17; the sequence is NIQKESTLHLVLRLRGG. A Glycyl lysine isopeptide (Lys-Gly) (interchain with G-Cter in ubiquitin) cross-link involves residue Lys-4. A Glycyl lysine isopeptide (Gly-Lys) (interchain with K-? in acceptor proteins) cross-link involves residue Gly-17. An N6,N6,N6-trimethyllysine modification is found at Lys-39.

This sequence in the N-terminal section; belongs to the ubiquitin family. In the C-terminal section; belongs to the eukaryotic ribosomal protein eL40 family. Part of the 60S ribosomal subunit. Trimethylation of Lys-39 ('Lys-22' of the mature chain) by SMYD5 promotes translation elongation and protein synthesis.

It is found in the cytoplasm. The protein resides in the nucleus. Exists either covalently attached to another protein, or free (unanchored). When covalently bound, it is conjugated to target proteins via an isopeptide bond either as a monomer (monoubiquitin), a polymer linked via different Lys residues of the ubiquitin (polyubiquitin chains) or a linear polymer linked via the initiator Met of the ubiquitin (linear polyubiquitin chains). Polyubiquitin chains, when attached to a target protein, have different functions depending on the Lys residue of the ubiquitin that is linked: Lys-6-linked may be involved in DNA repair; Lys-11-linked is involved in ERAD (endoplasmic reticulum-associated degradation) and in cell-cycle regulation; Lys-29-linked is involved in proteotoxic stress response and cell cycle; Lys-33-linked is involved in kinase modification; Lys-48-linked is involved in protein degradation via the proteasome; Lys-63-linked is involved in endocytosis, DNA-damage responses as well as in signaling processes leading to activation of the transcription factor NF-kappa-B. Linear polymer chains formed via attachment by the initiator Met lead to cell signaling. Ubiquitin is usually conjugated to Lys residues of target proteins, however, in rare cases, conjugation to Cys or Ser residues has been observed. When polyubiquitin is free (unanchored-polyubiquitin), it also has distinct roles, such as in activation of protein kinases, and in signaling. In terms of biological role, component of the 60S subunit of the ribosome. The protein is Ubiquitin-ribosomal protein eL40 fusion protein (UBA52) of Gallus gallus (Chicken).